The chain runs to 72 residues: Small ribosomal subunit protein bS18 (72 aa).

Belongs to the bacterial ribosomal protein bS18 family. Part of the 30S ribosomal subunit. Forms a tight heterodimer with protein bS6.

Its function is as follows. Binds as a heterodimer with protein bS6 to the central domain of the 16S rRNA, where it helps stabilize the platform of the 30S subunit. The chain is Small ribosomal subunit protein bS18 from Trichodesmium erythraeum (strain IMS101).